The primary structure comprises 222 residues: UPF0316 protein Mboo_0791 (222 aa).

The next 3 membrane-spanning stretches (helical) occupy residues 25 to 45 (FFLF…IFLA), 67 to 87 (LAPV…VGVL), and 93 to 113 (IAYF…GLVI).

Belongs to the UPF0316 family.

It localises to the cell membrane. This chain is UPF0316 protein Mboo_0791, found in Methanoregula boonei (strain DSM 21154 / JCM 14090 / 6A8).